The following is a 252-amino-acid chain: Probable transcriptional regulatory protein Kole_1935 (252 aa).

The protein belongs to the TACO1 family.

It is found in the cytoplasm. This chain is Probable transcriptional regulatory protein Kole_1935, found in Kosmotoga olearia (strain ATCC BAA-1733 / DSM 21960 / TBF 19.5.1).